The chain runs to 601 residues: Keratin, type II cytoskeletal 5 (601 aa).

A head region spans residues 1–168 (MSRQSTVSFR…DPTIQRVRTE (168 aa)). Serine 5, serine 8, serine 16, and serine 21 each carry phosphoserine. At threonine 24 the chain carries Phosphothreonine; by CDK1. Phosphoserine is present on residues serine 26, serine 36, serine 50, serine 64, serine 71, and serine 75. Phosphothreonine; by CDK1 is present on threonine 152. A Phosphothreonine; by AURKB modification is found at threonine 167. The segment at 169 to 204 (EREQIKTLNNKFASFIDKVRFLEQQNKVLDTKWALL) is coil 1A. One can recognise an IF rod domain in the interval 169–482 (EREQIKTLNN…KLLEGEECRL (314 aa)). Positions 205 to 223 (QEQGTKTVRQNLEPLLEQY) are linker 1. Residues 224 to 316 (INNLRRQLDG…FFDAELSQMQ (93 aa)) form a coil 1B region. Residues 317-339 (THVSDTSVVLSMDNNRSLDLDSI) are linker 12. The segment at 340-478 (IAEVKAQYED…ATYRKLLEGE (139 aa)) is coil 2. Residues 479-601 (ECRLSGEGVG…TSSSRKSFKS (123 aa)) form a tail region. The interval 576–601 (FGSGGGSSSSVKFVSTTSSSRKSFKS) is disordered. Over residues 583 to 601 (SSSVKFVSTTSSSRKSFKS) the composition is skewed to low complexity.

Belongs to the intermediate filament family. In terms of assembly, heterodimer of a type I and a type II keratin. Heterodimer with type I keratin KRT25 leading to the formation of keratin intermediate filament (KIF) network. Forms a heterodimer (via 2B domains) with KRT14 (via 2B domains). Interacts with TCHP. Interacts with EPPK1. Interacts with AMELX. Interacts with PKP1 (via N-terminus) and PKP2. In terms of processing, phosphorylated by CDK1, AURKB and Rho-kinase, phosphorylation is regulated by the cell cycle. Thr-24 phosphorylation, mediated by CDK1, peaks during prometaphase or metaphase cells with phosphorylated filamentous structures evident throughout the cytoplasm early mitosis. CDK1 phosphorylates Thr-24 in mitotic cells at the site of injury. Post-translationally, O-glycosylated.

The protein localises to the cytoplasm. Functionally, required for the formation of keratin intermediate filaments in the basal epidermis and maintenance of the skin barrier in response to mechanical stress. Regulates the recruitment of Langerhans cells to the epidermis, potentially by modulation of the abundance of macrophage chemotactic cytokines, macrophage inflammatory cytokines and CTNND1 localization in keratinocytes. In Bos taurus (Bovine), this protein is Keratin, type II cytoskeletal 5.